Here is a 247-residue protein sequence, read N- to C-terminus: 3-deoxy-manno-octulosonate cytidylyltransferase (247 aa).

The protein belongs to the KdsB family.

The protein resides in the cytoplasm. It catalyses the reaction 3-deoxy-alpha-D-manno-oct-2-ulosonate + CTP = CMP-3-deoxy-beta-D-manno-octulosonate + diphosphate. It functions in the pathway nucleotide-sugar biosynthesis; CMP-3-deoxy-D-manno-octulosonate biosynthesis; CMP-3-deoxy-D-manno-octulosonate from 3-deoxy-D-manno-octulosonate and CTP: step 1/1. Its pathway is bacterial outer membrane biogenesis; lipopolysaccharide biosynthesis. Functionally, activates KDO (a required 8-carbon sugar) for incorporation into bacterial lipopolysaccharide in Gram-negative bacteria. The polypeptide is 3-deoxy-manno-octulosonate cytidylyltransferase (Methylorubrum extorquens (strain PA1) (Methylobacterium extorquens)).